Here is a 295-residue protein sequence, read N- to C-terminus: Cytidine deaminase (295 aa).

CMP/dCMP-type deaminase domains follow at residues 48-168 (SDKE…FGPA) and 187-295 (DDKD…FVNV). 89–91 (NME) is a substrate binding site. H102 serves as a coordination point for Zn(2+). Residue E104 is the Proton donor of the active site. Zn(2+) is bound by residues C129 and C132.

The protein belongs to the cytidine and deoxycytidylate deaminase family. As to quaternary structure, homodimer. Zn(2+) serves as cofactor.

It catalyses the reaction cytidine + H2O + H(+) = uridine + NH4(+). It carries out the reaction 2'-deoxycytidine + H2O + H(+) = 2'-deoxyuridine + NH4(+). Its function is as follows. This enzyme scavenges exogenous and endogenous cytidine and 2'-deoxycytidine for UMP synthesis. In Vibrio parahaemolyticus serotype O3:K6 (strain RIMD 2210633), this protein is Cytidine deaminase.